Consider the following 775-residue polypeptide: ADP-ribosylation factor GTPase-activating protein AGD4 (775 aa).

The region spanning 2 to 226 is the BAR domain; that stretch reads ATFINLEDSP…IHQILTYAQQ (225 aa). Residues 288 to 421 form the PH domain; that stretch reads EVIKQGYLLK…WVNKITKAIG (134 aa). In terms of domain architecture, Arf-GAP spans 467–603; the sequence is DDVSTILRGL…ALVIKDESEA (137 aa). The C4-type zinc finger occupies 482–505; that stretch reads CAECNAPEPDWASLNLGVLLCIQC. ANK repeat units lie at residues 682–711 and 715–744; these read QGCS…DLNI and HGRT…RPSI.

Expressed in roots, hypocotyls, cotyledons, leaf and shoot apical meristems and siliques.

Its function is as follows. Probable GTPase-activating protein. The sequence is that of ADP-ribosylation factor GTPase-activating protein AGD4 (AGD4) from Arabidopsis thaliana (Mouse-ear cress).